A 261-amino-acid chain; its full sequence is Ribonuclease HII (261 aa).

Residues 71-259 enclose the RNase H type-2 domain; it reads KYIAGVDEVG…VKEAKLHFDS (189 aa). Asp77, Glu78, and Asp169 together coordinate a divalent metal cation.

It belongs to the RNase HII family. Requires Mn(2+) as cofactor. It depends on Mg(2+) as a cofactor.

Its subcellular location is the cytoplasm. It catalyses the reaction Endonucleolytic cleavage to 5'-phosphomonoester.. Functionally, endonuclease that specifically degrades the RNA of RNA-DNA hybrids. This chain is Ribonuclease HII, found in Listeria monocytogenes serotype 4a (strain HCC23).